A 115-amino-acid polypeptide reads, in one-letter code: U3-lycotoxin-Ls1a (115 aa).

Residues 1-20 (MKFVLLFGVFLVTLFSYSSA) form the signal peptide. A propeptide spanning residues 21–44 (EMLDDFDQAAEDELLSLIEKEEAR) is cleaved from the precursor. 4 disulfide bridges follow: C48-C63, C55-C72, C62-C87, and C74-C85.

This sequence belongs to the neurotoxin 19 (CSTX) family. 01 subfamily. As to expression, expressed by the venom gland.

It is found in the secreted. This chain is U3-lycotoxin-Ls1a, found in Lycosa singoriensis (Wolf spider).